A 184-amino-acid polypeptide reads, in one-letter code: Peptidyl-tRNA hydrolase (184 aa).

Position 14 (Tyr-14) interacts with tRNA. His-19 (proton acceptor) is an active-site residue. Residues Phe-64, Asn-66, and Asn-112 each contribute to the tRNA site.

This sequence belongs to the PTH family. In terms of assembly, monomer.

The protein resides in the cytoplasm. It carries out the reaction an N-acyl-L-alpha-aminoacyl-tRNA + H2O = an N-acyl-L-amino acid + a tRNA + H(+). Its function is as follows. Hydrolyzes ribosome-free peptidyl-tRNAs (with 1 or more amino acids incorporated), which drop off the ribosome during protein synthesis, or as a result of ribosome stalling. Functionally, catalyzes the release of premature peptidyl moieties from peptidyl-tRNA molecules trapped in stalled 50S ribosomal subunits, and thus maintains levels of free tRNAs and 50S ribosomes. This Listeria innocua serovar 6a (strain ATCC BAA-680 / CLIP 11262) protein is Peptidyl-tRNA hydrolase.